A 275-amino-acid chain; its full sequence is Phosphite import ATP-binding protein PxtA (275 aa).

Positions 11 to 252 (LRVDRLSVVY…QLERIYAGRS (242 aa)) constitute an ABC transporter domain. 44–51 (GLSGAGKS) lines the ATP pocket. The segment at 251 to 275 (RSTTQPANAPAEPPVMLEPSLEMSR) is disordered.

This sequence belongs to the ABC transporter superfamily. Phosphonates importer (TC 3.A.1.9.1) family. As to quaternary structure, the complex is composed of two ATP-binding proteins (PtxA), two transmembrane proteins (PtxC) and a solute-binding protein (PtxB).

It is found in the cell inner membrane. The enzyme catalyses phosphite(out) + ATP + H2O = phosphite(in) + ADP + phosphate + H(+). Part of the ABC transporter complex PtxABC involved in phosphite import. Responsible for energy coupling to the transport system. The chain is Phosphite import ATP-binding protein PxtA (ptxA) from Stutzerimonas stutzeri (Pseudomonas stutzeri).